A 345-amino-acid chain; its full sequence is Acetylserotonin O-methyltransferase (345 aa).

S-adenosyl-L-methionine-binding positions include Tyr147, Trp164, Asp210, Gly235 to Phe237, and Arg252. Catalysis depends on His255, which acts as the Proton donor/acceptor. Residues Asp256, Asn302, and Gln306 each coordinate substrate.

It belongs to the class I-like SAM-binding methyltransferase superfamily. Cation-independent O-methyltransferase family. As to quaternary structure, homodimer. Expressed in the pineal gland (at protein level). In the retina, very low expression is found at the mRNA level, and not at the protein level.

It catalyses the reaction N-acetylserotonin + S-adenosyl-L-methionine = melatonin + S-adenosyl-L-homocysteine + H(+). Its pathway is aromatic compound metabolism; melatonin biosynthesis; melatonin from serotonin: step 1/2. In terms of biological role, catalyzes the transfer of a methyl group onto N-acetylserotonin, producing melatonin (N-acetyl-5-methoxytryptamine). Does not show Acetylserotonin O-methyltransferase activity. The polypeptide is Acetylserotonin O-methyltransferase (ASMT) (Homo sapiens (Human)).